The primary structure comprises 281 residues: Tetraspanin-5 (281 aa).

Residues 1–7 are Cytoplasmic-facing; that stretch reads MNRMSNT. A helical membrane pass occupies residues 8–28; sequence VIGFLNILTLISSIVLLGSAL. The Extracellular segment spans residues 29 to 44; that stretch reads WMGRSKTTCEHFLQKP. Residues 45–65 form a helical membrane-spanning segment; the sequence is LLILGLAILILSVAGLVGACC. Residues 66-74 are Cytoplasmic-facing; sequence DVAWVLWVY. A helical transmembrane segment spans residues 75–95; the sequence is LFFMVFIIVALMGLTLFGFIV. Topologically, residues 96-221 are extracellular; sequence TSHSGGVVVD…TVRRDWHKLS (126 aa). Residues 222–242 form a helical membrane-spanning segment; it reads LVNVIVVIFLIAVYCVGCCAF. Residues 243–281 lie on the Cytoplasmic side of the membrane; sequence KNAKRPQHYGFPYGRYGMSKSRPGWEQSWSRWWHGRDRY.

Belongs to the tetraspanin (TM4SF) family.

It is found in the membrane. Its function is as follows. May be involved in the regulation of cell differentiation. The sequence is that of Tetraspanin-5 (TET5) from Arabidopsis thaliana (Mouse-ear cress).